A 75-amino-acid chain; its full sequence is Neuropeptide-like protein 31 (75 aa).

The first 22 residues, 1 to 22 (MISTSSILVLVVLLACFMAANA), serve as a signal peptide directing secretion. A tyrosine amide mark is found at Tyr-29, Tyr-39, Tyr-49, Tyr-56, and Tyr-64. A Tryptophan amide modification is found at Trp-73.

The protein belongs to the YARP (YGGW-amide related peptide) family. Expressed in hypoderm.

It is found in the secreted. In terms of biological role, antimicrobial peptides that have antifungal activity against D.coniospora. Has weak antibacterial activity against Gram-positive bacteria M.luteus and Gram-negative E.coli. The chain is Neuropeptide-like protein 31 (nlp-31) from Caenorhabditis elegans.